We begin with the raw amino-acid sequence, 473 residues long: ATP synthase subunit beta, chloroplastic (473 aa).

172 to 179 (GGAGVGKT) serves as a coordination point for ATP.

The protein belongs to the ATPase alpha/beta chains family. In terms of assembly, F-type ATPases have 2 components, CF(1) - the catalytic core - and CF(0) - the membrane proton channel. CF(1) has five subunits: alpha(3), beta(3), gamma(1), delta(1), epsilon(1). CF(0) has four main subunits: a(1), b(1), b'(1) and c(9-12).

Its subcellular location is the plastid. It localises to the chloroplast thylakoid membrane. It carries out the reaction ATP + H2O + 4 H(+)(in) = ADP + phosphate + 5 H(+)(out). Functionally, produces ATP from ADP in the presence of a proton gradient across the membrane. The catalytic sites are hosted primarily by the beta subunits. This is ATP synthase subunit beta, chloroplastic from Pteridium esculentum (Bracken fern).